Here is a 427-residue protein sequence, read N- to C-terminus: Inward rectifier potassium channel 2 (427 aa).

Over 1-81 (MGSVRTNRYS…IFTTCVDIRW (81 aa)) the chain is Cytoplasmic. S-nitrosocysteine is present on C76. The chain crosses the membrane as a helical span at residues 82–106 (RWMLVIFCLAFVLSWLFFGCVFWLI). At 107–128 (ALLHGDLDASKESKACVSEVNS) the chain is on the extracellular side. An intramembrane region (helical; Pore-forming) is located at residues 129 to 140 (FTAAFLFSIETQ). Positions 141 to 147 (TTIGYGF) form an intramembrane region, pore-forming. The short motif at 142–147 (TIGYGF) is the Selectivity filter element. Residues 148 to 156 (RCVTDECPI) are Extracellular-facing. Residues 157–178 (AVFMVVFQSIVGCIIDAFIIGA) form a helical membrane-spanning segment. Residues 179–427 (VMAKMAKPKK…PRPLRRESEI (249 aa)) are Cytoplasmic-facing. Positions 181 to 208 (AKMAKPKKRNETLVFSHNAVIAMRDGKL) are polyphosphoinositide (PIP2)-binding. The tract at residues 384-427 (SKEEDDSENGVPESTSTDTPPDIDLHNQASVPLEPRPLRRESEI) is disordered. Residues 425 to 427 (SEI) carry the PDZ-binding motif.

It belongs to the inward rectifier-type potassium channel (TC 1.A.2.1) family. KCNJ2 subfamily. In terms of assembly, homotetramer. Homomultimeric and heteromultimeric association with KCNJ4/Kir2.3. Can form heteromeric channels with Kir2.6/KCNJ18. Associates, via its PDZ-recognition domain, with a complex containing LIN7A, LIN7B, LIN7C, DLG1, CASK and APBA1. In terms of processing, S-nitrosylation increases the open probability and inward rectifying currents.

The protein localises to the cell membrane. The protein resides in the sarcolemma. It is found in the T-tubule. It catalyses the reaction K(+)(in) = K(+)(out). Activated by phosphatidylinositol 4,5 biphosphate (PtdIns(4,5)P2). Its function is as follows. Inward rectifier potassium channels are characterized by a greater tendency to allow potassium to flow into the cell rather than out of it. Their voltage dependence is regulated by the concentration of extracellular potassium; as external potassium is raised, the voltage range of the channel opening shifts to more positive voltages. The inward rectification is mainly due to the blockage of outward current by internal magnesium. Can be blocked by extracellular barium and cesium. Probably participates in establishing action potential waveform and excitability of neuronal and muscle tissues. In Sus scrofa (Pig), this protein is Inward rectifier potassium channel 2 (KCNJ2).